The chain runs to 124 residues: Orexigenic neuropeptide QRFP (124 aa).

The first 17 residues, 1–17 (MRGFRPLLSLLLPLSAC), serve as a signal peptide directing secretion. A propeptide spanning residues 18–79 (FPLLDRRGPT…REHTGFRLGR (62 aa)) is cleaved from the precursor. The segment at 63–101 (REQQASHREHTGFRLGRQDGSSEAAGFLPADSEKASGPL) is disordered. Phenylalanine amide is present on F122.

The protein belongs to the RFamide neuropeptide family. Ligand for the G-protein coupled receptor QRFPR/GPR103. Expressed in the brain with highest levels in the periventricular hypothalamic nucleus and lateral hypothalamic areas. Expressed at moderate levels in the adrenal gland, eye, heart, intestine, liver, lung, kidney, mesenteric lymph node, ovary, placenta, Peyer patches, skin, spleen, stomach, testis, thymus and uterus.

The protein resides in the secreted. In terms of biological role, stimulates feeding and grooming behavior, metabolic rate and locomotor activity and increases blood pressure. May have orexigenic activity. May promote aldosterone secretion by the adrenal gland. This chain is Orexigenic neuropeptide QRFP, found in Mus musculus (Mouse).